Reading from the N-terminus, the 835-residue chain is Adhesion G protein-coupled receptor E5 (835 aa).

Positions 1–20 (MGGRVFLAFCVWLTLPGAET) are cleaved as a signal peptide. Over 21–552 (QDSRGCARWC…EDWKLTLITR (532 aa)) the chain is Extracellular. Residues 22–63 (DSRGCARWCPQNSSCVNATACRCNPGFSSFSEIITTPTETCD) enclose the EGF-like 1 domain. 15 cysteine pairs are disulfide-bonded: Cys26/Cys36, Cys30/Cys42, Cys44/Cys62, Cys68/Cys82, Cys76/Cys91, Cys93/Cys114, Cys120/Cys133, Cys127/Cys142, Cys144/Cys158, Cys164/Cys177, Cys171/Cys186, Cys188/Cys207, Cys213/Cys226, Cys220/Cys235, and Cys237/Cys256. N-linked (GlcNAc...) asparagine glycosylation is found at Asn33 and Asn38. Positions 64-115 (DINECATPSKVSCGKFSDCWNTEGSYDCVCSPGYEPVSGAKTFKNESENTCQ) constitute an EGF-like 2; calcium-binding domain. Asn108 carries N-linked (GlcNAc...) asparagine glycosylation. In terms of domain architecture, EGF-like 3; calcium-binding spans 116–159 (DVDECQQNPRLCKSYGTCVNTLGSYTCQCLPGFKFIPEDPKVCT). The 49-residue stretch at 160 to 208 (DVNECTSGQNPCHSSTHCLNNVGSYQCRCRPGWQPIPGSPNGPNNTVCE) folds into the EGF-like 4; calcium-binding domain. N-linked (GlcNAc...) asparagine glycosylation occurs at Asn203. The EGF-like 5; calcium-binding domain occupies 209–257 (DVDECSSGQHQCDSSTVCFNTVGSYSCRCRPGWKPRHGIPNNQKDTVCE). Residues 349–543 (PFTYISPSNT…AILMAHYDVE (195 aa)) enclose the GAIN-B domain. Asn371, Asn406, Asn413, Asn453, and Asn520 each carry an N-linked (GlcNAc...) asparagine glycan. 2 cysteine pairs are disulfide-bonded: Cys495–Cys525 and Cys513–Cys527. The interval 495-543 (CAFWKSDSDRGGHWATEGCQVLGSKNGSTTCQCSHLSSFAILMAHYDVE) is GPS. Residues 553–572 (VGLALSLFCLLLCILTFLLV) form a helical membrane-spanning segment. Topologically, residues 573 to 581 (RPIQGSRTT) are cytoplasmic. Residues 582–601 (IHLHLCICLFVGSTIFLAGI) form a helical membrane-spanning segment. Residues 602 to 620 (ENEGGQVGLRCRLVAGLLH) are Extracellular-facing. Residues 621 to 642 (YCFLAAFCWMSLEGLELYFLVV) traverse the membrane as a helical segment. The Cytoplasmic segment spans residues 643-653 (RVFQGQGLSTR). The chain crosses the membrane as a helical span at residues 654–674 (WLCLIGYGVPLLIVGVSAAIY). Over 675 to 691 (SKGYGRPRYCWLDFEQG) the chain is Extracellular. The helical transmembrane segment at 692–712 (FLWSFLGPVTFIILCNAVIFV) threads the bilayer. Over 713-739 (TTVWKLTQKFSEINPDMKKLKKARALT) the chain is Cytoplasmic. A helical membrane pass occupies residues 740 to 760 (ITAIAQLFLLGCTWVFGLFIF). Topologically, residues 761-766 (DDRSLV) are extracellular. Residues 767–789 (LTYVFTILNCLQGAFLYLLHCLL) traverse the membrane as a helical segment. Residues 790-835 (NKKVREEYRKWACLVAGGSKYSEFTSTTSGTGHNQTRALRASESGI) are Cytoplasmic-facing. Residues 814-826 (TSTTSGTGHNQTR) show a composition bias toward polar residues. The tract at residues 814–835 (TSTTSGTGHNQTRALRASESGI) is disordered. A Phosphoserine modification is found at Ser815. Phosphothreonine is present on Thr816. Phosphoserine is present on Ser818. Position 825 is a phosphothreonine (Thr825). Phosphoserine is present on residues Ser831 and Ser833.

The protein belongs to the G-protein coupled receptor 2 family. LN-TM7 subfamily. In terms of assembly, forms a heterodimer, consisting of a large extracellular region (alpha subunit) non-covalently linked to a seven-transmembrane moiety (beta subunit). Interacts with complement decay-accelerating factor (DAF). The largest isoform (isoform 1) interacts with chondroitin sulfate. Proteolytically cleaved into 2 subunits, an extracellular alpha subunit and a seven-transmembrane subunit. As to expression, broadly expressed, found on most hematopoietic cells, including activated lymphocytes, monocytes, macrophages, dendritic cells, and granulocytes. Expressed also abundantly by smooth muscle cells. Expressed in thyroid, colorectal, gastric, esophageal and pancreatic carcinomas too. Expression are increased under inflammatory conditions in the CNS of multiple sclerosis and in synovial tissue of patients with rheumatoid arthritis. Increased expression of CD97 in the synovium is accompanied by detectable levels of soluble CD97 in the synovial fluid.

The protein localises to the cell membrane. It is found in the secreted. The protein resides in the extracellular space. Functionally, receptor potentially involved in both adhesion and signaling processes early after leukocyte activation. Plays an essential role in leukocyte migration. In Homo sapiens (Human), this protein is Adhesion G protein-coupled receptor E5.